Reading from the N-terminus, the 284-residue chain is tRNA uridine(34) hydroxylase (284 aa).

Positions 132 to 226 (DGRPVVMLDT…YFEEVGGAHY (95 aa)) constitute a Rhodanese domain. Residue C186 is the Cysteine persulfide intermediate of the active site.

This sequence belongs to the TrhO family.

The enzyme catalyses uridine(34) in tRNA + AH2 + O2 = 5-hydroxyuridine(34) in tRNA + A + H2O. In terms of biological role, catalyzes oxygen-dependent 5-hydroxyuridine (ho5U) modification at position 34 in tRNAs. The sequence is that of tRNA uridine(34) hydroxylase from Burkholderia vietnamiensis (strain G4 / LMG 22486) (Burkholderia cepacia (strain R1808)).